A 180-amino-acid polypeptide reads, in one-letter code: ATP-dependent protease subunit HslV (180 aa).

The active site involves Thr2. The Na(+) site is built by Gly158, Cys161, and Thr164.

Belongs to the peptidase T1B family. HslV subfamily. In terms of assembly, a double ring-shaped homohexamer of HslV is capped on each side by a ring-shaped HslU homohexamer. The assembly of the HslU/HslV complex is dependent on binding of ATP.

Its subcellular location is the cytoplasm. The catalysed reaction is ATP-dependent cleavage of peptide bonds with broad specificity.. Its activity is regulated as follows. Allosterically activated by HslU binding. Functionally, protease subunit of a proteasome-like degradation complex believed to be a general protein degrading machinery. The sequence is that of ATP-dependent protease subunit HslV from Baumannia cicadellinicola subsp. Homalodisca coagulata.